We begin with the raw amino-acid sequence, 246 residues long: Cell division protein ZapD (246 aa).

It belongs to the ZapD family. Interacts with FtsZ.

Its subcellular location is the cytoplasm. Cell division factor that enhances FtsZ-ring assembly. Directly interacts with FtsZ and promotes bundling of FtsZ protofilaments, with a reduction in FtsZ GTPase activity. In Vibrio parahaemolyticus serotype O3:K6 (strain RIMD 2210633), this protein is Cell division protein ZapD.